Reading from the N-terminus, the 163-residue chain is Transcription elongation factor GreA (163 aa).

A coiled-coil region spans residues F11–E38.

This sequence belongs to the GreA/GreB family.

In terms of biological role, necessary for efficient RNA polymerase transcription elongation past template-encoded arresting sites. The arresting sites in DNA have the property of trapping a certain fraction of elongating RNA polymerases that pass through, resulting in locked ternary complexes. Cleavage of the nascent transcript by cleavage factors such as GreA or GreB allows the resumption of elongation from the new 3'terminus. GreA releases sequences of 2 to 3 nucleotides. The polypeptide is Transcription elongation factor GreA (Nitratidesulfovibrio vulgaris (strain ATCC 29579 / DSM 644 / CCUG 34227 / NCIMB 8303 / VKM B-1760 / Hildenborough) (Desulfovibrio vulgaris)).